A 473-amino-acid polypeptide reads, in one-letter code: Ribulose bisphosphate carboxylase large chain (473 aa).

Positions 1–2 are excised as a propeptide; that stretch reads MS. Residue Pro3 is modified to N-acetylproline. The residue at position 14 (Lys14) is an N6,N6,N6-trimethyllysine. Substrate contacts are provided by Asn123 and Thr173. Lys175 acts as the Proton acceptor in catalysis. Lys177 serves as a coordination point for substrate. Mg(2+)-binding residues include Lys201, Asp203, and Glu204. Lys201 is modified (N6-carboxylysine). His294 serves as the catalytic Proton acceptor. Substrate is bound by residues Arg295, His327, and Ser379.

It belongs to the RuBisCO large chain family. Type I subfamily. Heterohexadecamer of 8 large chains and 8 small chains; disulfide-linked. The disulfide link is formed within the large subunit homodimers. Mg(2+) serves as cofactor. Post-translationally, the disulfide bond which can form in the large chain dimeric partners within the hexadecamer appears to be associated with oxidative stress and protein turnover.

The protein resides in the plastid. It localises to the chloroplast. The enzyme catalyses 2 (2R)-3-phosphoglycerate + 2 H(+) = D-ribulose 1,5-bisphosphate + CO2 + H2O. It catalyses the reaction D-ribulose 1,5-bisphosphate + O2 = 2-phosphoglycolate + (2R)-3-phosphoglycerate + 2 H(+). Functionally, ruBisCO catalyzes two reactions: the carboxylation of D-ribulose 1,5-bisphosphate, the primary event in carbon dioxide fixation, as well as the oxidative fragmentation of the pentose substrate in the photorespiration process. Both reactions occur simultaneously and in competition at the same active site. The chain is Ribulose bisphosphate carboxylase large chain from Ajuga chamaepitys (Yellow bugle).